The sequence spans 171 residues: Transcription antitermination protein NusB (171 aa).

It belongs to the NusB family.

Functionally, involved in transcription antitermination. Required for transcription of ribosomal RNA (rRNA) genes. Binds specifically to the boxA antiterminator sequence of the ribosomal RNA (rrn) operons. This Pelodictyon phaeoclathratiforme (strain DSM 5477 / BU-1) protein is Transcription antitermination protein NusB.